The primary structure comprises 414 residues: Transforming growth factor beta-2 proprotein (414 aa).

Residues 1 to 20 (MHYCVLSAFLLLHLVTVALS) form the signal peptide. N-linked (GlcNAc...) asparagine glycosylation is found at Asn72, Asn140, and Asn241. 4 disulfide bridges follow: Cys309–Cys318, Cys317–Cys380, Cys346–Cys411, and Cys350–Cys413.

The protein belongs to the TGF-beta family. Interacts with the serine proteases, HTRA1 and HTRA3. Interacts with ASPN. Interacts with MFAP5. As to quaternary structure, interacts with Transforming growth factor beta-2 (TGF-beta-2) chain; interaction is non-covalent and maintains (TGF-beta-2) in a latent state. Interacts with LRRC32/GARP; leading to regulate activation of TGF-beta-2. Interacts with NREP; the interaction results in a decrease in TGFB2 autoinduction. In terms of assembly, transforming growth factor beta-2: Homodimer; disulfide-linked. Transforming growth factor beta-2: Interacts with TGF-beta receptors (TGFBR1 and TGFBR2), leading to signal transduction. The precursor proprotein is cleaved in the Golgi apparatus to form Transforming growth factor beta-2 (TGF-beta-2) and Latency-associated peptide (LAP) chains, which remain non-covalently linked, rendering TGF-beta-2 inactive.

The protein resides in the secreted. Its subcellular location is the extracellular space. It is found in the extracellular matrix. Precursor of the Latency-associated peptide (LAP) and Transforming growth factor beta-2 (TGF-beta-2) chains, which constitute the regulatory and active subunit of TGF-beta-2, respectively. In terms of biological role, required to maintain the Transforming growth factor beta-2 (TGF-beta-2) chain in a latent state during storage in extracellular matrix. Associates non-covalently with TGF-beta-2 and regulates its activation via interaction with 'milieu molecules', such as LTBP1 and LRRC32/GARP, that control activation of TGF-beta-2. Functionally, multifunctional protein that regulates various processes such as angiogenesis and heart development. Activation into mature form follows different steps: following cleavage of the proprotein in the Golgi apparatus, Latency-associated peptide (LAP) and Transforming growth factor beta-2 (TGF-beta-2) chains remain non-covalently linked rendering TGF-beta-2 inactive during storage in extracellular matrix. At the same time, LAP chain interacts with 'milieu molecules', such as LTBP1 and LRRC32/GARP, that control activation of TGF-beta-2 and maintain it in a latent state during storage in extracellular milieus. Once activated following release of LAP, TGF-beta-2 acts by binding to TGF-beta receptors (TGFBR1 and TGFBR2), which transduce signal. The chain is Transforming growth factor beta-2 proprotein (TGFB2) from Bos taurus (Bovine).